We begin with the raw amino-acid sequence, 615 residues long: Threonine--tRNA ligase (615 aa).

The tract at residues 1–132 (MRILQLHCDR…PLAEGFKVIT (132 aa)) is editing domain. Positions 196–495 (PHVALMKRMG…SARGTKPELP (300 aa)) are catalytic. Residues C288, H340, and H464 each contribute to the Zn(2+) site.

The protein belongs to the class-II aminoacyl-tRNA synthetase family. Homodimer. Zn(2+) is required as a cofactor.

Its subcellular location is the cytoplasm. The catalysed reaction is tRNA(Thr) + L-threonine + ATP = L-threonyl-tRNA(Thr) + AMP + diphosphate + H(+). In terms of biological role, catalyzes the attachment of threonine to tRNA(Thr) in a two-step reaction: L-threonine is first activated by ATP to form Thr-AMP and then transferred to the acceptor end of tRNA(Thr). Also edits incorrectly charged L-seryl-tRNA(Thr). The chain is Threonine--tRNA ligase (thrS) from Cenarchaeum symbiosum (strain A).